The chain runs to 211 residues: Ubiquitin-conjugating enzyme E2 S (211 aa).

The UBC core domain occupies 11–157 (HIIRQVYKEV…ARLMTEIHAQ (147 aa)). The active-site Glycyl thioester intermediate is the C95. The segment at 157–211 (QGSSLRGKDPTDPCSSASATLVSGDGPMAKKHAGDRDKKLAAKKKTDKKRALRRL) is disordered. The segment covering 197 to 211 (AAKKKTDKKRALRRL) has biased composition (basic residues).

The protein belongs to the ubiquitin-conjugating enzyme family.

It catalyses the reaction S-ubiquitinyl-[E1 ubiquitin-activating enzyme]-L-cysteine + [E2 ubiquitin-conjugating enzyme]-L-cysteine = [E1 ubiquitin-activating enzyme]-L-cysteine + S-ubiquitinyl-[E2 ubiquitin-conjugating enzyme]-L-cysteine.. Its pathway is protein modification; protein ubiquitination. In terms of biological role, catalyzes the covalent attachment of ubiquitin to other proteins. Acts as an essential factor of the anaphase promoting complex/cyclosome (APC/C), a cell cycle-regulated ubiquitin ligase that controls progression through mitosis. Acts by specifically elongating 'Lys-11'-linked polyubiquitin chains initiated by the E2 enzyme ube2c/ubch10 on APC/C substrates, enhancing the degradation of APC/C substrates by the proteasome and promoting mitotic exit. The polypeptide is Ubiquitin-conjugating enzyme E2 S (ube2s) (Xenopus tropicalis (Western clawed frog)).